A 238-amino-acid polypeptide reads, in one-letter code: IkB-like protein (238 aa).

ANK repeat units follow at residues Gly-48–His-80, Gly-87–Cys-118, Gly-124–Lys-153, and Gly-158–Met-187. A Nuclear localization signal motif is present at residues His-80–Asp-86. Residues Lys-202 to Lys-213 carry the Nuclear localization signal motif. The PxIxITxC motif; Interaction with host PPP3CA signature appears at Pro-205 to Cys-212. An FLCV motif motif is present at residues Phe-227–Val-230.

This sequence belongs to the asfivirus A238L family. Interacts with host PPIA. Interacts with host PPP3CA/Calcineurin. Interacts with host RELA/p65; interaction of the 32 kDa form with host RELA results in the formation of a stable complex with NF-kappa-B. Interacts with host PPP3R1. Interacts with host EP300; this interaction inhibits the association of host EP300 with host RELA, JUN and NFATC2. In terms of processing, the protein exists in a 28 kDa and a 32 kDa form, probably due to post-translational modifications which are neither phosphorylation, nor sumoylation.

Its subcellular location is the host nucleus. The protein resides in the host cytoplasm. IkB-like protein that inhibits the binding of NF-kappa-B to DNA, thereby downregulating pro-inflammatory cytokine production. Forms a heterodimer with the NF-kappa-B subunit RELA/p65 and prevents the activation of the NF-kappa-B transcription factor. Inhibits calcineurin function, which is required for the induction of nuclear factor of activated T cells (NFAT)-dependent immune response genes. Prevents the binding of substrates to calcineurin without affecting the phosphatase activity. Does not contain the serine residues that are phosphorylated by host IkB kinase and thus is not degraded following stimulation of the NFkB pathway. The polypeptide is IkB-like protein (A238L) (Ornithodoros (relapsing fever ticks)).